The sequence spans 424 residues: Putative polyketide beta-ketoacyl synthase 2 (424 aa).

One can recognise a Ketosynthase family 3 (KS3) domain in the interval 13-416 (SRRAVVTGLG…GSNSALVLRR (404 aa)).

Belongs to the thiolase-like superfamily. Beta-ketoacyl-ACP synthases family.

Functionally, involved in developmentally regulated synthesis of a compound biosynthetically related to polyketide antibiotics which is essential for spore color in Streptomyces coelicolor. This chain is Putative polyketide beta-ketoacyl synthase 2, found in Streptomyces coelicolor (strain ATCC BAA-471 / A3(2) / M145).